A 351-amino-acid chain; its full sequence is MEENKKTVDGSVDFTEEQEALVVKSWNAMKNNSCDLSLKFFTKILEIAPPAKQMFSFLKDSNVPLEQNPKLKPHAMSVFLMTCESAVQLRKAGKVRVRESNLKKLGATHFKTGVQDEHFEVTKQALLETIEEAIPEMWSLAMKNAWAEAHDQLANAIKVEMKEAHDQMDNANLIINMEENTGSCFTEEQEALVVKSWNAIKYNSGDLSLKFFKKILEIAPPAKQLFSFLKDSNVPLEHNPKLKPHAMSVFLMTCESAVQLRKAGKVTVRESNLKKLGATHFKTGVKDEHFEVTKQALLETIKEALPEMWSPAMENAWGEAHDQLANAIKAEMKKTDHDHQTNVEDKSKPSS.

Globin domains are found at residues 13 to 162 (DFTE…VEMK) and 184 to 333 (CFTE…AEMK). Residues S56, K70, H74, K104, T108, H109, S227, K241, H245, K275, T279, and H280 each coordinate heme b. The tract at residues 331–351 (EMKKTDHDHQTNVEDKSKPSS) is disordered.

The protein belongs to the plant globin family. Monomer. Heme b is required as a cofactor. Predominantly expressed in nodules and roots, and, to a lesser extent, in leaves, at low levels in pods, but barely in stems, petioles, buds and flowers. In terms of tissue distribution, mainly expressed in nodules and roots at low levels, and barely in leaves. As to expression, expressed at very low levels in nodules, roots and pods.

Its subcellular location is the cytoplasm. It localises to the nucleus. It catalyses the reaction Fe(III)-heme b-[protein] + nitric oxide + H2O = Fe(II)-heme b-[protein] + nitrite + 2 H(+). In terms of biological role, phytoglobin that regulates the fine tuning of nitric oxide (NO) concentration in the cytosol in response to sudden changes in O(2) availability, and performs both symbiotic and nonsymbiotic functions. Exhibits NO dioxygenase activity in the presence of O(2) but nitrite reductase (NiR) activity in the absence of O(2) (e.g. during flooding or in waterlogged soil). May not function as an oxygen storage or transport protein. Extremely reactive toward the physiological ligands O(2), nitric oxide (NO), and nitrite with a very high affinity for O(2) through an hexacoordinate heme iron because of a very low dissociation constant. Functionally, very high affinity for O(2) through two hexacoordinate heme irons. Extremely reactive toward the physiological ligands O(2), nitric oxide (NO), and nitrite. Very high affinity for O(2) through a single hexacoordinate heme iron. Extremely reactive toward the physiological ligands O(2), nitric oxide (NO), and nitrite. This is Anaerobic nitrite reductase Glb1-2 from Medicago truncatula (Barrel medic).